A 273-amino-acid polypeptide reads, in one-letter code: Putative pyruvate, phosphate dikinase regulatory protein (273 aa).

149–156 (GPSRTSKT) contacts ADP.

The protein belongs to the pyruvate, phosphate/water dikinase regulatory protein family. PDRP subfamily.

The enzyme catalyses N(tele)-phospho-L-histidyl/L-threonyl-[pyruvate, phosphate dikinase] + ADP = N(tele)-phospho-L-histidyl/O-phospho-L-threonyl-[pyruvate, phosphate dikinase] + AMP + H(+). It carries out the reaction N(tele)-phospho-L-histidyl/O-phospho-L-threonyl-[pyruvate, phosphate dikinase] + phosphate + H(+) = N(tele)-phospho-L-histidyl/L-threonyl-[pyruvate, phosphate dikinase] + diphosphate. Bifunctional serine/threonine kinase and phosphorylase involved in the regulation of the pyruvate, phosphate dikinase (PPDK) by catalyzing its phosphorylation/dephosphorylation. The sequence is that of Putative pyruvate, phosphate dikinase regulatory protein from Rickettsia typhi (strain ATCC VR-144 / Wilmington).